We begin with the raw amino-acid sequence, 130 residues long: Small ribosomal subunit protein uS8 (130 aa).

Belongs to the universal ribosomal protein uS8 family. Part of the 30S ribosomal subunit. Contacts proteins S5 and S12.

In terms of biological role, one of the primary rRNA binding proteins, it binds directly to 16S rRNA central domain where it helps coordinate assembly of the platform of the 30S subunit. This Shewanella halifaxensis (strain HAW-EB4) protein is Small ribosomal subunit protein uS8.